Reading from the N-terminus, the 451-residue chain is Alpha-galactosidase (451 aa).

Position 5–71 (5–71 (PKITFIGAGS…ASGRITCHTN (67 aa))) interacts with NAD(+). Residue asparagine 151 coordinates substrate. Cysteine 173 serves as a coordination point for Mn(2+). The active-site Proton donor is the histidine 174. Histidine 203 contacts Mn(2+). Position 287 (arginine 287) interacts with substrate.

Belongs to the glycosyl hydrolase 4 family. In terms of assembly, homodimer. Mn(2+) is required as a cofactor. NAD(+) serves as cofactor.

It carries out the reaction Hydrolysis of terminal, non-reducing alpha-D-galactose residues in alpha-D-galactosides, including galactose oligosaccharides, galactomannans and galactolipids.. The protein is Alpha-galactosidase (melA) of Salmonella typhimurium (strain LT2 / SGSC1412 / ATCC 700720).